The chain runs to 642 residues: Threonine--tRNA ligase (642 aa).

Positions 1 to 61 (MPVITLPDGS…ENDAQLSIIT (61 aa)) constitute a TGS domain. Residues 243 to 534 (DHRKIGKQLD…LTEEFAGFFP (292 aa)) are catalytic. Position 286 is an N6-acetyllysine (K286). Residues C334, H385, and H511 each contribute to the Zn(2+) site.

Belongs to the class-II aminoacyl-tRNA synthetase family. As to quaternary structure, homodimer. It depends on Zn(2+) as a cofactor.

It localises to the cytoplasm. It catalyses the reaction tRNA(Thr) + L-threonine + ATP = L-threonyl-tRNA(Thr) + AMP + diphosphate + H(+). In terms of biological role, catalyzes the attachment of threonine to tRNA(Thr) in a two-step reaction: L-threonine is first activated by ATP to form Thr-AMP and then transferred to the acceptor end of tRNA(Thr). Also edits incorrectly charged L-seryl-tRNA(Thr). The chain is Threonine--tRNA ligase from Shigella boydii serotype 18 (strain CDC 3083-94 / BS512).